A 608-amino-acid chain; its full sequence is Microtubule-associated protein VP7 (608 aa).

The protein localises to the virion. It localises to the host cytoplasm. It is found in the host cytoskeleton. Its function is as follows. Minor inner capsid component. Displays NTPase and RNA 5'-triphosphatase (RTPase) activities. May function as a cofactor of polymerase. Associates with microtubules and plays a role in the formation, structural organization and morphology of viral inclusions, where the assembly of cores and the replication of viral RNA occur. The protein is Microtubule-associated protein VP7 of Oryza latifolia (Indian wild rice).